A 318-amino-acid chain; its full sequence is Deoxyribose-phosphate aldolase (318 aa).

D155 serves as the catalytic Proton donor/acceptor. Catalysis depends on K218, which acts as the Schiff-base intermediate with acetaldehyde. The Proton donor/acceptor role is filled by K254.

Belongs to the DeoC/FbaB aldolase family. DeoC type 2 subfamily. As to quaternary structure, interacts with YBX1.

It localises to the cytoplasm. The protein resides in the cytoplasmic granule. Its subcellular location is the nucleus. It carries out the reaction 2-deoxy-D-ribose 5-phosphate = D-glyceraldehyde 3-phosphate + acetaldehyde. The protein operates within carbohydrate degradation; 2-deoxy-D-ribose 1-phosphate degradation; D-glyceraldehyde 3-phosphate and acetaldehyde from 2-deoxy-alpha-D-ribose 1-phosphate: step 2/2. Its function is as follows. Catalyzes a reversible aldol reaction between acetaldehyde and D-glyceraldehyde 3-phosphate to generate 2-deoxy-D-ribose 5-phosphate. Participates in stress granule (SG) assembly. May allow ATP production from extracellular deoxyinosine in conditions of energy deprivation. This is Deoxyribose-phosphate aldolase (DERA) from Bos taurus (Bovine).